We begin with the raw amino-acid sequence, 174 residues long: Large ribosomal subunit protein uL18 (174 aa).

This sequence belongs to the universal ribosomal protein uL18 family. In terms of assembly, part of the 50S ribosomal subunit. Contacts the 5S and 23S rRNAs.

In terms of biological role, this is one of the proteins that bind and probably mediate the attachment of the 5S RNA into the large ribosomal subunit, where it forms part of the central protuberance. The sequence is that of Large ribosomal subunit protein uL18 from Methanosarcina mazei (strain ATCC BAA-159 / DSM 3647 / Goe1 / Go1 / JCM 11833 / OCM 88) (Methanosarcina frisia).